We begin with the raw amino-acid sequence, 401 residues long: Deubiquitinase and deneddylase Dub1 (401 aa).

A compositionally biased stretch (polar residues) spans 1–11 (MLSPTNSTSKT). The disordered stretch occupies residues 1–24 (MLSPTNSTSKTAPVPPRDSSKPVL). A helical transmembrane segment spans residues 40 to 60 (TALAVLLVVVTLGLILLFYSF). Residues 77 to 130 (KEQPTISIPVPLPSPPLAVPRPSTPPPPVISRPSTPSAPKPSTPPPLLPKAPKP) form a disordered region. Residues 86–128 (VPLPSPPLAVPRPSTPPPPVISRPSTPSAPKPSTPPPLLPKAP) are compositionally biased toward pro residues. Active-site residues include His-275, Asp-292, and Cys-345.

This sequence belongs to the peptidase C48 family. In terms of assembly, binds to host NFKBIA.

Its subcellular location is the secreted. It is found in the host cell. The protein localises to the membrane. Effector proteins function to alter host cell physiology and promote bacterial survival in host tissues. This protease possesses deubiquitinating and deneddylating activities. Impairs ubiquitination and degradation of NF-kappa-B inhibitor alpha (NFKBIA), thereby preventing NF-kappa-B activation. The polypeptide is Deubiquitinase and deneddylase Dub1 (cdu1) (Chlamydia trachomatis serovar L2 (strain ATCC VR-902B / DSM 19102 / 434/Bu)).